A 317-amino-acid chain; its full sequence is Methionyl-tRNA formyltransferase (317 aa).

112–115 contributes to the (6S)-5,6,7,8-tetrahydrofolate binding site; that stretch reads SLLP.

It belongs to the Fmt family.

The catalysed reaction is L-methionyl-tRNA(fMet) + (6R)-10-formyltetrahydrofolate = N-formyl-L-methionyl-tRNA(fMet) + (6S)-5,6,7,8-tetrahydrofolate + H(+). Its function is as follows. Attaches a formyl group to the free amino group of methionyl-tRNA(fMet). The formyl group appears to play a dual role in the initiator identity of N-formylmethionyl-tRNA by promoting its recognition by IF2 and preventing the misappropriation of this tRNA by the elongation apparatus. The protein is Methionyl-tRNA formyltransferase of Mycoplasma capricolum subsp. capricolum (strain California kid / ATCC 27343 / NCTC 10154).